The primary structure comprises 344 residues: MAAIELIDLKKNYGPVSAVKGINLTVADGEMIVLVGPSGCGKSTLLRMIAGLEAISSGHLRIAGSDVGHVDPADRNIAMVFQNYALYPHMTVRQNLEYGLKNRRVARGEIERRIANAASILEIGEFLERRPRQLSGGQRQRVAMGRAIVRDPAAFLFDEPLSNLDAKLRVQMRVEIRRLQRQLKTTSLYVTHDQLEAMTLADRLVVMNGGRIEQIGTPIEVYRRPETVFVAGFIGSPPMNLIDLDQLGPCQLALPRDTDVIGIRPSAINLGSGSAHDLRFDAFVELIETVGDENNVHLRIDGADKRVVASISTNQPLQEGDRISCHVGMDGLHPFNRATGRRTD.

In terms of domain architecture, ABC transporter spans Ile4–Ile234. Gly36–Ser43 provides a ligand contact to ATP.

Belongs to the ABC transporter superfamily. sn-glycerol-3-phosphate importer (TC 3.A.1.1.3) family. As to quaternary structure, the complex is composed of two ATP-binding proteins (UgpC), two transmembrane proteins (UgpA and UgpE) and a solute-binding protein (UgpB).

The protein localises to the cell inner membrane. It carries out the reaction sn-glycerol 3-phosphate(out) + ATP + H2O = sn-glycerol 3-phosphate(in) + ADP + phosphate + H(+). Its function is as follows. Part of the ABC transporter complex UgpBAEC involved in sn-glycerol-3-phosphate (G3P) import. Responsible for energy coupling to the transport system. The polypeptide is sn-glycerol-3-phosphate import ATP-binding protein UgpC 2 (Rhizobium johnstonii (strain DSM 114642 / LMG 32736 / 3841) (Rhizobium leguminosarum bv. viciae)).